We begin with the raw amino-acid sequence, 342 residues long: Trace amine-associated receptor 3 (342 aa).

Residues 1-35 (MDLIYIPEDLSSCPKFGNKSCPPTNRSFRVRLIMY) lie on the Extracellular side of the membrane. 2 N-linked (GlcNAc...) asparagine glycosylation sites follow: Asn18 and Asn25. Disulfide bonds link Cys21–Cys185 and Cys104–Cys189. The chain crosses the membrane as a helical span at residues 36–56 (LLMTGAMVITIFGNLVIIISI). At 57 to 68 (SHFKQLHSPTNF) the chain is on the cytoplasmic side. A helical membrane pass occupies residues 69–89 (LILSMATTDFLLGFVIMPYSM). Topologically, residues 90 to 150 (VRSVESCWYF…TTMTASMIKR (61 aa)) are extracellular. Residues 151-168 (LLFFCWAAPALFSFGLVL) form a helical membrane-spanning segment. Residues 169–172 (SEAN) are Cytoplasmic-facing. The tract at residues 173–186 (VSGMQSYEILIACF) is extracellular Loop 2 (ECL2). The helical transmembrane segment at 173-193 (VSGMQSYEILIACFNFCALTF) threads the bilayer. Topologically, residues 194–198 (NKFWG) are extracellular. The helical transmembrane segment at 199 to 223 (TILFTTCFFTPGSIMVGIYGKIFIV) threads the bilayer. Topologically, residues 224–256 (SRRHARALGNMPENTKGAGRNLSKKKDRKAAKT) are cytoplasmic. Residues 257 to 277 (LGIVMGVFLACWLPCFLAVLI) traverse the membrane as a helical segment. Residues 278-286 (DPYLDYSTP) lie on the Extracellular side of the membrane. A helical transmembrane segment spans residues 287-307 (IIVLDLLVWLGYFNSTCNPLI). Topologically, residues 308–342 (HGFFYPWFRKALEHIVSGKIFRSNSDTANLFPEAH) are cytoplasmic.

It belongs to the G-protein coupled receptor 1 family.

The protein localises to the cell membrane. Olfactory receptor activated by several primary trace amines, including isoamylamine. Activated by isoamylamine and cyclohexylamine, but not to the corresponding alcohols, isoamylalcohol and cyclohexanol. This receptor is probably mediated by the G(s)-class of G-proteins which activate adenylate cyclase. This Rattus norvegicus (Rat) protein is Trace amine-associated receptor 3 (Taar3).